The chain runs to 671 residues: Putative glycoside hydrolase BT_3595 (671 aa).

Positions 1–24 (MITGIISILCYLQCFGTLSASVTA) are cleaved as a signal peptide.

This sequence belongs to the glycoside hydrolase-like 3 (GHL3) family.

In Bacteroides thetaiotaomicron (strain ATCC 29148 / DSM 2079 / JCM 5827 / CCUG 10774 / NCTC 10582 / VPI-5482 / E50), this protein is Putative glycoside hydrolase BT_3595.